A 1018-amino-acid chain; its full sequence is Isoleucine--tRNA ligase (1018 aa).

The 'HIGH' region motif lies at 43-53 (PYTTGRIHLGT). The 'KMSKS' region signature appears at 586-590 (KMSKS). K589 lines the ATP pocket.

Belongs to the class-I aminoacyl-tRNA synthetase family. IleS type 2 subfamily. As to quaternary structure, monomer. Zn(2+) serves as cofactor.

The protein resides in the cytoplasm. It carries out the reaction tRNA(Ile) + L-isoleucine + ATP = L-isoleucyl-tRNA(Ile) + AMP + diphosphate. Its function is as follows. Catalyzes the attachment of isoleucine to tRNA(Ile). As IleRS can inadvertently accommodate and process structurally similar amino acids such as valine, to avoid such errors it has two additional distinct tRNA(Ile)-dependent editing activities. One activity is designated as 'pretransfer' editing and involves the hydrolysis of activated Val-AMP. The other activity is designated 'posttransfer' editing and involves deacylation of mischarged Val-tRNA(Ile). In Archaeoglobus fulgidus (strain ATCC 49558 / DSM 4304 / JCM 9628 / NBRC 100126 / VC-16), this protein is Isoleucine--tRNA ligase.